The following is a 1415-amino-acid chain: Non-structural polyprotein 1AB (1415 aa).

Positions 104–142 (KLIHKANALQERLRLSQEEKATLALDVQFLQHENVRLKE) form a coiled coil. The next 5 membrane-spanning stretches (helical) occupy residues 154–174 (MKWI…GGYA), 239–259 (VFYY…LAIG), 286–306 (VLPT…TLMV), 313–333 (LLAI…LCFM), and 344–364 (GLIA…LTGT). Residues His-461, Asp-489, and Ser-551 each act as charge relay system; for serine protease activity in the active site. The stretch at 587-616 (VKAPSRVELLKEEIERLKAQLNSAAENPAT) forms a coiled coil. Tyr-693 is subject to O-(5'-phospho-RNA)-tyrosine. Positions 753-813 (FDQAKPTPAP…KNEPQPYSQT (61 aa)) are disordered. Basic and acidic residues predominate over residues 783–795 (SQKKEKQLEHEQQ). The segment covering 800 to 813 (TKPQKNEPQPYSQT) has biased composition (polar residues). The RdRp catalytic domain maps to 1160-1286 (KHFIEFDWTR…TTPSVPDDYE (127 aa)).

It belongs to the astroviridae polyprotein 1AB family. Monomer. Post-translationally, cleaved by the viral and host proteases. The protease is probably autocatalytically cleaved.

It localises to the host membrane. The catalysed reaction is RNA(n) + a ribonucleoside 5'-triphosphate = RNA(n+1) + diphosphate. Functionally, responsible for the cleavage of the polyprotein into functional products. Covalently attached to the 5' extremity of the genomic and subgenomic RNAs. It may serve as a primer for the replicase. This is Non-structural polyprotein 1AB (ORF1) from Human astrovirus-4 (HAstV-4).